An 82-amino-acid chain; its full sequence is Escargot/snail protein homolog (82 aa).

C2H2-type zinc fingers lie at residues 1 to 5, 18 to 40, 44 to 66, and 72 to 82; these read HLQFH, FSCKLCDKVYTSLGALKMHIRTH, CKCDICHKAFSRPWLLQGHIRTH, and FSCQHCHRAFA.

This sequence belongs to the snail C2H2-type zinc-finger protein family.

It localises to the nucleus. In Bradysia coprophila (Dark-winged fungus gnat), this protein is Escargot/snail protein homolog.